The following is a 734-amino-acid chain: Photosystem I P700 chlorophyll a apoprotein A2 (734 aa).

A run of 8 helical transmembrane segments spans residues 46–69, 135–158, 175–199, 273–291, 330–353, 369–395, 417–439, and 517–535; these read IFAS…FHVA, LYVG…LHLQ, LNHH…HVAI, MAHH…GHMY, LHFQ…QHMY, ASLY…IFFV, AIIS…LYVH, and FLVH…LILV. Residues C559 and C568 each coordinate [4Fe-4S] cluster. 2 helical membrane-spanning segments follow: residues 575-596 and 643-665; these read AFYL…YFHW and LSVW…MFLI. 3 residues coordinate chlorophyll a: H654, M662, and Y670. Phylloquinone is bound at residue W671. Residues 707 to 727 traverse the membrane as a helical segment; the sequence is LVGLTHFSVGYVLTYAAFLIA.

This sequence belongs to the PsaA/PsaB family. The PsaA/B heterodimer binds the P700 chlorophyll special pair and subsequent electron acceptors. PSI consists of a core antenna complex that captures photons, and an electron transfer chain that converts photonic excitation into a charge separation. The eukaryotic PSI reaction center is composed of at least 11 subunits. Requires P700 is a chlorophyll a/chlorophyll a' dimer, A0 is one or more chlorophyll a, A1 is one or both phylloquinones and FX is a shared 4Fe-4S iron-sulfur center. as cofactor.

It is found in the plastid. The protein resides in the chloroplast thylakoid membrane. It catalyses the reaction reduced [plastocyanin] + hnu + oxidized [2Fe-2S]-[ferredoxin] = oxidized [plastocyanin] + reduced [2Fe-2S]-[ferredoxin]. Functionally, psaA and PsaB bind P700, the primary electron donor of photosystem I (PSI), as well as the electron acceptors A0, A1 and FX. PSI is a plastocyanin/cytochrome c6-ferredoxin oxidoreductase, converting photonic excitation into a charge separation, which transfers an electron from the donor P700 chlorophyll pair to the spectroscopically characterized acceptors A0, A1, FX, FA and FB in turn. Oxidized P700 is reduced on the lumenal side of the thylakoid membrane by plastocyanin or cytochrome c6. In Chlorella vulgaris (Green alga), this protein is Photosystem I P700 chlorophyll a apoprotein A2.